The primary structure comprises 408 residues: Peptidase T (408 aa).

His-78 contributes to the Zn(2+) binding site. Asp-80 is an active-site residue. Residue Asp-140 participates in Zn(2+) binding. Glu-173 functions as the Proton acceptor in the catalytic mechanism. 3 residues coordinate Zn(2+): Glu-174, Asp-196, and His-379.

It belongs to the peptidase M20B family. The cofactor is Zn(2+).

The protein localises to the cytoplasm. The enzyme catalyses Release of the N-terminal residue from a tripeptide.. Its function is as follows. Cleaves the N-terminal amino acid of tripeptides. This Citrobacter koseri (strain ATCC BAA-895 / CDC 4225-83 / SGSC4696) protein is Peptidase T.